Reading from the N-terminus, the 259-residue chain is Major cell-binding factor (259 aa).

The signal sequence occupies residues 1-26 (MVFRKSLLKLAVFALGACVAFSNANA).

The protein belongs to the bacterial solute-binding protein 3 family.

The protein localises to the cell surface. In terms of biological role, common antigen and a major cell adherence molecule. Most probably involved, with PEB1C, in a binding-protein-dependent transport system for an amino acid. May be involved in binding to intestinal cells. This chain is Major cell-binding factor (peb1A), found in Campylobacter jejuni subsp. jejuni serotype O:2 (strain ATCC 700819 / NCTC 11168).